Reading from the N-terminus, the 122-residue chain is Large ribosomal subunit protein bL12 (122 aa).

The protein belongs to the bacterial ribosomal protein bL12 family. Homodimer. Part of the ribosomal stalk of the 50S ribosomal subunit. Forms a multimeric L10(L12)X complex, where L10 forms an elongated spine to which 2 to 4 L12 dimers bind in a sequential fashion. Binds GTP-bound translation factors.

Forms part of the ribosomal stalk which helps the ribosome interact with GTP-bound translation factors. Is thus essential for accurate translation. The sequence is that of Large ribosomal subunit protein bL12 from Vibrio campbellii (strain ATCC BAA-1116).